The chain runs to 155 residues: Large ribosomal subunit protein bL9c (155 aa).

This sequence belongs to the bacterial ribosomal protein bL9 family.

It is found in the plastid. The protein resides in the chloroplast. Its function is as follows. Binds to the 23S rRNA. This Porphyra purpurea (Red seaweed) protein is Large ribosomal subunit protein bL9c.